The sequence spans 476 residues: Bifunctional protein HldE (476 aa).

The segment at 1-319 (MKVSLPAFEK…EALALHHGES (319 aa)) is ribokinase. 195-198 (NMSE) contributes to the ATP binding site. Residue Asp264 is part of the active site. A cytidylyltransferase region spans residues 345 to 476 (MTNGCFDILH…AIIQNIMANQ (132 aa)).

In the N-terminal section; belongs to the carbohydrate kinase PfkB family. It in the C-terminal section; belongs to the cytidylyltransferase family. Homodimer.

It catalyses the reaction D-glycero-beta-D-manno-heptose 7-phosphate + ATP = D-glycero-beta-D-manno-heptose 1,7-bisphosphate + ADP + H(+). The catalysed reaction is D-glycero-beta-D-manno-heptose 1-phosphate + ATP + H(+) = ADP-D-glycero-beta-D-manno-heptose + diphosphate. Its pathway is nucleotide-sugar biosynthesis; ADP-L-glycero-beta-D-manno-heptose biosynthesis; ADP-L-glycero-beta-D-manno-heptose from D-glycero-beta-D-manno-heptose 7-phosphate: step 1/4. It participates in nucleotide-sugar biosynthesis; ADP-L-glycero-beta-D-manno-heptose biosynthesis; ADP-L-glycero-beta-D-manno-heptose from D-glycero-beta-D-manno-heptose 7-phosphate: step 3/4. Catalyzes the phosphorylation of D-glycero-D-manno-heptose 7-phosphate at the C-1 position to selectively form D-glycero-beta-D-manno-heptose-1,7-bisphosphate. Functionally, catalyzes the ADP transfer from ATP to D-glycero-beta-D-manno-heptose 1-phosphate, yielding ADP-D-glycero-beta-D-manno-heptose. The polypeptide is Bifunctional protein HldE (Shewanella baltica (strain OS195)).